Reading from the N-terminus, the 183-residue chain is Putative 3-methyladenine DNA glycosylase (183 aa).

This sequence belongs to the DNA glycosylase MPG family.

The sequence is that of Putative 3-methyladenine DNA glycosylase from Rickettsia africae (strain ESF-5).